Reading from the N-terminus, the 303-residue chain is Acetyl-coenzyme A carboxylase carboxyl transferase subunit beta (303 aa).

Residues 25–294 (LWIKCPETGE…NDVSAKSLNG (270 aa)) form the CoA carboxyltransferase N-terminal domain.

Belongs to the AccD/PCCB family. Acetyl-CoA carboxylase is a heterohexamer composed of biotin carboxyl carrier protein (AccB), biotin carboxylase (AccC) and two subunits each of ACCase subunit alpha (AccA) and ACCase subunit beta (AccD).

Its subcellular location is the cytoplasm. It catalyses the reaction N(6)-carboxybiotinyl-L-lysyl-[protein] + acetyl-CoA = N(6)-biotinyl-L-lysyl-[protein] + malonyl-CoA. It participates in lipid metabolism; malonyl-CoA biosynthesis; malonyl-CoA from acetyl-CoA: step 1/1. Functionally, component of the acetyl coenzyme A carboxylase (ACC) complex. Biotin carboxylase (BC) catalyzes the carboxylation of biotin on its carrier protein (BCCP) and then the CO(2) group is transferred by the transcarboxylase to acetyl-CoA to form malonyl-CoA. This Rhizobium rhizogenes (strain K84 / ATCC BAA-868) (Agrobacterium radiobacter) protein is Acetyl-coenzyme A carboxylase carboxyl transferase subunit beta.